The primary structure comprises 98 residues: NADH-ubiquinone oxidoreductase chain 4L (98 aa).

3 consecutive transmembrane segments (helical) span residues 2–22 (PSIF…TLVF), 29–49 (SLLC…LIIL), and 61–81 (ILLL…LVMV).

Belongs to the complex I subunit 4L family. Core subunit of respiratory chain NADH dehydrogenase (Complex I) which is composed of 45 different subunits.

It is found in the mitochondrion inner membrane. The enzyme catalyses a ubiquinone + NADH + 5 H(+)(in) = a ubiquinol + NAD(+) + 4 H(+)(out). Its function is as follows. Core subunit of the mitochondrial membrane respiratory chain NADH dehydrogenase (Complex I) which catalyzes electron transfer from NADH through the respiratory chain, using ubiquinone as an electron acceptor. Part of the enzyme membrane arm which is embedded in the lipid bilayer and involved in proton translocation. This chain is NADH-ubiquinone oxidoreductase chain 4L (MT-ND4L), found in Avahi laniger (Eastern woolly lemur).